Here is a 435-residue protein sequence, read N- to C-terminus: MNQQTVNVIGAGLAGSEAAWQLAKRGIQVKLYEMRPVRQTAAHHTDKFAELVCSNSLRSNTLANAVGVLKEEMRALDSAIIQSADKCSVPAGGALAVDRHEFAQSVTDLVKNHPNVTVLTEEVTEIPEGPTVIATGPLTSESLSQQLKELTGEEYLYFYDAAAPIVEKDSLDMEKVYLKSRYDKGEAAYLNCPMTEEEFDRFYEALTTAETVPLKEFEKEIFFEGCMPIEVMAKRGKKTMLFGPMKPVGLEDPKTGKRPYAVVQLRQDDAAGTLYNIVGFQTHLKWGDQKEVLKLIPGLENVDIVRYGVMHRNTFINSPSLLNPTYQFKQRNDLFFAGQMTGVEGYVESAASGLVAGINAAKLVLGQDLVTFPQETAIGSMAHYITTTNQKNFQPMNANFGLLKELPVKIKNKKERNEEYAKRAIETIQTISKTI.

Residue glycine 10–glycine 15 coordinates FAD.

This sequence belongs to the MnmG family. TrmFO subfamily. FAD serves as cofactor.

The protein localises to the cytoplasm. It carries out the reaction uridine(54) in tRNA + (6R)-5,10-methylene-5,6,7,8-tetrahydrofolate + NADH + H(+) = 5-methyluridine(54) in tRNA + (6S)-5,6,7,8-tetrahydrofolate + NAD(+). The enzyme catalyses uridine(54) in tRNA + (6R)-5,10-methylene-5,6,7,8-tetrahydrofolate + NADPH + H(+) = 5-methyluridine(54) in tRNA + (6S)-5,6,7,8-tetrahydrofolate + NADP(+). Its function is as follows. Catalyzes the folate-dependent formation of 5-methyl-uridine at position 54 (M-5-U54) in all tRNAs. This Bacillus velezensis (strain DSM 23117 / BGSC 10A6 / LMG 26770 / FZB42) (Bacillus amyloliquefaciens subsp. plantarum) protein is Methylenetetrahydrofolate--tRNA-(uracil-5-)-methyltransferase TrmFO.